A 1461-amino-acid polypeptide reads, in one-letter code: Autotransporter adhesin SadA (1461 aa).

Residues 1–54 (MNRIFKVLWNAATGTFVVTSETAKSRGKKNGRRKLAVSALIGLSSIMVSADALA) form the signal peptide. The surface exposed passenger domain stretch occupies residues 55 to 1372 (NAGNDTGDGV…EEANTYTDQK (1318 aa)). The segment at 1373 to 1461 (MGEMNSKIKG…SAAIGAGFQW (89 aa)) is translocator domain. 4 beta stranded membrane passes run 1407–1417 (GANMTSIAGGT), 1421–1431 (ESAVAIGVSMV), 1440–1446 (KLQGTSN), and 1450–1461 (DYSAAIGAGFQW).

The protein belongs to the autotransporter-2 (AT-2) (TC 1.B.40) family. Homotrimer.

The protein resides in the cell surface. It localises to the cell outer membrane. Functionally, involved in cell aggregation, biofilm formation, and adhesion to human intestinal epithelial cells. The sequence is that of Autotransporter adhesin SadA from Salmonella typhimurium (strain LT2 / SGSC1412 / ATCC 700720).